Consider the following 490-residue polypeptide: ATP synthase subunit beta, plastid (490 aa).

Residue 170-177 (GGAGVGKT) participates in ATP binding.

The protein belongs to the ATPase alpha/beta chains family. F-type ATPases have 2 components, CF(1) - the catalytic core - and CF(0) - the membrane proton channel. CF(1) has five subunits: alpha(3), beta(3), gamma(1), delta(1), epsilon(1). CF(0) has four main subunits: a(1), b(1), b'(1) and c(9-12).

The protein localises to the plastid membrane. It catalyses the reaction ATP + H2O + 4 H(+)(in) = ADP + phosphate + 5 H(+)(out). In terms of biological role, produces ATP from ADP in the presence of a proton gradient across the membrane. The catalytic sites are hosted primarily by the beta subunits. The polypeptide is ATP synthase subunit beta, plastid (atpB) (Cuscuta japonica (Japanese dodder)).